The chain runs to 1286 residues: ABC transporter B family member 4 (1286 aa).

The interval Met-1 to Glu-39 is disordered. A compositionally biased stretch (basic and acidic residues) spans Ser-18–Glu-39. Residues Phe-60–Met-80 traverse the membrane as a helical segment. The 287-residue stretch at Met-63–Ala-349 folds into the ABC transmembrane type-1 1 domain. Residues Asn-94 and Asn-97 are each glycosylated (N-linked (GlcNAc...) asparagine). Helical transmembrane passes span Phe-109–Ile-129, Ile-186–Leu-206, Leu-208–Ile-228, Gly-288–Tyr-308, and Gly-317–Leu-337. The ABC transporter 1 domain occupies Ile-384–Arg-620. Gly-419–Ser-426 contributes to the ATP binding site. Asn-500 and Asn-571 each carry an N-linked (GlcNAc...) asparagine glycan. The segment covering Lys-625–Lys-636 has biased composition (basic and acidic residues). A disordered region spans residues Lys-625–Arg-669. Low complexity predominate over residues Ser-646–Arg-669. N-linked (GlcNAc...) asparagine glycosylation occurs at Asn-666. Position 671 is a phosphoserine (Ser-671). The ABC transmembrane type-1 2 domain occupies Leu-720–Lys-1007. Helical transmembrane passes span Ile-721–Ile-741 and Ile-764–Phe-784. Asn-816 and Asn-846 each carry an N-linked (GlcNAc...) asparagine glycan. A run of 4 helical transmembrane segments spans residues Ile-850 to Ala-870, Met-871 to Ala-891, Gly-942 to Ala-962, and Thr-976 to Ser-996. An ABC transporter 2 domain is found at Ile-1042 to Gln-1279. Gly-1077 to Ser-1084 contributes to the ATP binding site. Asn-1131 and Asn-1230 each carry an N-linked (GlcNAc...) asparagine glycan.

This sequence belongs to the ABC transporter superfamily. ABCB family. Multidrug resistance exporter (TC 3.A.1.201) subfamily. Interacts with 1-naphthylphthalamic acid (NPA). Phosphorylation level varies significantly during early response to bacterial elicitor. In terms of tissue distribution, mostly expressed in roots, especially in the root elongation zone and lateral roots. In mature portion of the root, expressed in the epidermis and cortex. In the root elongation zone, confined to epidermis. In root tips, present in the root cap, S3 columella and epidermal cells.

It is found in the cell membrane. Auxin influx transporter that mediates the transport of auxin in roots. Contributes to the basipetal transport in hypocotyls and root tips by establishing an auxin uptake sink in the root cap. Confers sensitivity to 1-N-naphthylphthalamic acid (NPA). Regulates the root elongation, the initiation of lateral roots and the development of root hairs. Can transport IAA, indole-3-propionic acid, NPA syringic acid, vanillic acid and some auxin metabolites, but not 2,4-D and 1-naphthaleneacetic acid. The chain is ABC transporter B family member 4 (ABCB4) from Arabidopsis thaliana (Mouse-ear cress).